The following is a 259-amino-acid chain: Carbonic anhydrase 1 (259 aa).

A1 is modified (N-acetylalanine). In terms of domain architecture, Alpha-carbonic anhydrase spans 2–258 (HAWGYGPTDG…LKGRHVRASF (257 aa)). H63 (proton donor/acceptor) is an active-site residue. The Zn(2+) site is built by H93, H95, and H118. Substrate contacts are provided by residues T197 and 197 to 198 (TT).

This sequence belongs to the alpha-carbonic anhydrase family. Zn(2+) is required as a cofactor.

The protein localises to the cytoplasm. The catalysed reaction is hydrogencarbonate + H(+) = CO2 + H2O. Catalyzes the reversible hydration of carbon dioxide. This chain is Carbonic anhydrase 1 (ca1), found in Chionodraco hamatus (Antarctic teleost icefish).